A 117-amino-acid chain; its full sequence is Large ribosomal subunit protein bL19 (117 aa).

The protein belongs to the bacterial ribosomal protein bL19 family.

This protein is located at the 30S-50S ribosomal subunit interface and may play a role in the structure and function of the aminoacyl-tRNA binding site. The protein is Large ribosomal subunit protein bL19 of Kineococcus radiotolerans (strain ATCC BAA-149 / DSM 14245 / SRS30216).